The sequence spans 500 residues: MHSIIFKAAVALLGVSTAAGFSYQNSRLCLKLLAQGVEVDLPNSTDYETEQQNYWSTACTALRPDCIIAPKNARDMSRAVAAIQESKTTRFAIKSGGHSPNQLFSSIHDGVLISTRNLKQITYNEHTQTAVLGPGLKWEEAVGGLKDKGQTVVGGRLGGIGVGGLILGGGLSFLSGQYGWATNNVVNFEVVLANGTIVNANATSNPDLYAVMKGGSGNFGIVTAFTVKTHTQDPEIWGGSMFFDGNHTESLTRAIRDFAEYNTDDKASIIGTVNRNPSLIWVVFLTYDGPSPPEDVFRNFTQIPNIRNTVKRQSYHSLMLANDEYIRHGNRFSIGAETSVNPSGTHGYDIFKSFIDHWNDVTDDFIDIPGSASSLALQPLPRSISTKAKESGGDVAGFDPRYDYLLLQIAVSWNSSTSDSVIEAATRKYYTVQGDMIKQFTNEGKLPKAYCPLYLNDLNANQDFWGRVAPSTREKALAVRRAVDPTLFFQNRVTGGFRLG.

Positions 1 to 20 are cleaved as a signal peptide; the sequence is MHSIIFKAAVALLGVSTAAG. N43 is a glycosylation site (N-linked (GlcNAc...) asparagine). One can recognise an FAD-binding PCMH-type domain in the interval 60–232; the sequence is TALRPDCIIA…TAFTVKTHTQ (173 aa). H98 bears the Pros-8alpha-FAD histidine mark. N-linked (GlcNAc...) asparagine glycans are attached at residues N194, N201, N246, N299, and N414.

It belongs to the oxygen-dependent FAD-linked oxidoreductase family. The cofactor is FAD.

It is found in the secreted. This is an uncharacterized protein from Arthroderma benhamiae (strain ATCC MYA-4681 / CBS 112371) (Trichophyton mentagrophytes).